A 342-amino-acid polypeptide reads, in one-letter code: Methylthioribose-1-phosphate isomerase (342 aa).

Residues 49–51 (RGA), Arg86, and Gln187 contribute to the substrate site. Asp228 functions as the Proton donor in the catalytic mechanism. A substrate-binding site is contributed by 238–239 (NK).

Belongs to the eIF-2B alpha/beta/delta subunits family. MtnA subfamily.

It catalyses the reaction 5-(methylsulfanyl)-alpha-D-ribose 1-phosphate = 5-(methylsulfanyl)-D-ribulose 1-phosphate. The protein operates within amino-acid biosynthesis; L-methionine biosynthesis via salvage pathway; L-methionine from S-methyl-5-thio-alpha-D-ribose 1-phosphate: step 1/6. Catalyzes the interconversion of methylthioribose-1-phosphate (MTR-1-P) into methylthioribulose-1-phosphate (MTRu-1-P). This chain is Methylthioribose-1-phosphate isomerase, found in Klebsiella pneumoniae subsp. pneumoniae (strain ATCC 700721 / MGH 78578).